Here is a 112-residue protein sequence, read N- to C-terminus: Putative pterin-4-alpha-carbinolamine dehydratase (112 aa).

It belongs to the pterin-4-alpha-carbinolamine dehydratase family.

It carries out the reaction (4aS,6R)-4a-hydroxy-L-erythro-5,6,7,8-tetrahydrobiopterin = (6R)-L-erythro-6,7-dihydrobiopterin + H2O. This is Putative pterin-4-alpha-carbinolamine dehydratase from Vibrio parahaemolyticus serotype O3:K6 (strain RIMD 2210633).